A 581-amino-acid polypeptide reads, in one-letter code: Arginine--tRNA ligase (581 aa).

The short motif at 131-141 (ANPTGPLHVGH) is the 'HIGH' region element.

The protein belongs to the class-I aminoacyl-tRNA synthetase family. Monomer.

It is found in the cytoplasm. It carries out the reaction tRNA(Arg) + L-arginine + ATP = L-arginyl-tRNA(Arg) + AMP + diphosphate. The chain is Arginine--tRNA ligase from Ruegeria pomeroyi (strain ATCC 700808 / DSM 15171 / DSS-3) (Silicibacter pomeroyi).